Reading from the N-terminus, the 171-residue chain is UPF0690 protein C1orf52 homolog A (171 aa).

2 disordered regions span residues 1-56 (MAAE…GPDE) and 126-171 (NVYQ…KRKV). Residues 47 to 56 (EAKKLPGPDE) show a composition bias toward basic and acidic residues. Acidic residues predominate over residues 146 to 160 (EEEAQEDSPPSDDEQ).

This sequence belongs to the UPF0690 family.

The polypeptide is UPF0690 protein C1orf52 homolog A (Xenopus laevis (African clawed frog)).